A 292-amino-acid chain; its full sequence is tRNA pseudouridine synthase B (292 aa).

Residue aspartate 40 is the Nucleophile of the active site.

Belongs to the pseudouridine synthase TruB family. Type 1 subfamily.

The enzyme catalyses uridine(55) in tRNA = pseudouridine(55) in tRNA. In terms of biological role, responsible for synthesis of pseudouridine from uracil-55 in the psi GC loop of transfer RNAs. The chain is tRNA pseudouridine synthase B from Mycoplasma capricolum subsp. capricolum (strain California kid / ATCC 27343 / NCTC 10154).